The chain runs to 104 residues: Small ribosomal subunit protein uS10 (104 aa).

Belongs to the universal ribosomal protein uS10 family. As to quaternary structure, part of the 30S ribosomal subunit.

Involved in the binding of tRNA to the ribosomes. This chain is Small ribosomal subunit protein uS10, found in Aliarcobacter butzleri (strain RM4018) (Arcobacter butzleri).